The primary structure comprises 504 residues: D-alanine--D-alanyl carrier protein ligase (504 aa).

152 to 153 (TS) is an ATP binding site. Asp197 is a binding site for D-alanine. 292–297 (NTYGPT) contributes to the ATP binding site. Val301 is a D-alanine binding site. ATP-binding positions include Asp383, 394-397 (YNGR), and Lys492. Lys492 contributes to the D-alanine binding site.

The protein belongs to the ATP-dependent AMP-binding enzyme family. DltA subfamily.

The protein localises to the cytoplasm. It catalyses the reaction holo-[D-alanyl-carrier protein] + D-alanine + ATP = D-alanyl-[D-alanyl-carrier protein] + AMP + diphosphate. Its pathway is cell wall biogenesis; lipoteichoic acid biosynthesis. Functionally, catalyzes the first step in the D-alanylation of lipoteichoic acid (LTA), the activation of D-alanine and its transfer onto the D-alanyl carrier protein (Dcp) DltC. In an ATP-dependent two-step reaction, forms a high energy D-alanyl-AMP intermediate, followed by transfer of the D-alanyl residue as a thiol ester to the phosphopantheinyl prosthetic group of the Dcp. D-alanylation of LTA plays an important role in modulating the properties of the cell wall in Gram-positive bacteria, influencing the net charge of the cell wall. The sequence is that of D-alanine--D-alanyl carrier protein ligase from Bacillus cereus (strain Q1).